Reading from the N-terminus, the 520-residue chain is 3-phosphoshikimate 1-carboxyvinyltransferase, chloroplastic (520 aa).

The N-terminal 76 residues, 1-76 (MAQVSRICNG…KVMSSVSTAE (76 aa)), are a transit peptide targeting the chloroplast. The disordered stretch occupies residues 20–39 (LSKSSQRKSPLSVSLKTQQH). Positions 99, 100, and 104 each coordinate 3-phosphoshikimate. Lys99 contacts phosphoenolpyruvate. Residues Gly177 and Arg207 each contribute to the phosphoenolpyruvate site. Residues Ser254, Ser255, Gln256, Ser282, Asp407, and Lys434 each coordinate 3-phosphoshikimate. Gln256 provides a ligand contact to phosphoenolpyruvate. Catalysis depends on Asp407, which acts as the Proton acceptor. 3 residues coordinate phosphoenolpyruvate: Arg438, Arg480, and Lys505.

The protein belongs to the EPSP synthase family.

It is found in the plastid. The protein localises to the chloroplast. It catalyses the reaction 3-phosphoshikimate + phosphoenolpyruvate = 5-O-(1-carboxyvinyl)-3-phosphoshikimate + phosphate. Its pathway is metabolic intermediate biosynthesis; chorismate biosynthesis; chorismate from D-erythrose 4-phosphate and phosphoenolpyruvate: step 6/7. Functionally, catalyzes the transfer of the enolpyruvyl moiety of phosphoenolpyruvate (PEP) to the 5-hydroxyl of shikimate-3-phosphate (S3P) to produce enolpyruvyl shikimate-3-phosphate and inorganic phosphate. The sequence is that of 3-phosphoshikimate 1-carboxyvinyltransferase, chloroplastic from Arabidopsis thaliana (Mouse-ear cress).